We begin with the raw amino-acid sequence, 32 residues long: U13-ctenitoxin-Pn1a (32 aa).

3 cysteine pairs are disulfide-bonded: Cys3–Cys17, Cys10–Cys21, and Cys16–Cys30.

As to expression, expressed by the venom gland.

Its subcellular location is the secreted. Functionally, acts as a neurotoxin. This chain is U13-ctenitoxin-Pn1a, found in Phoneutria nigriventer (Brazilian armed spider).